We begin with the raw amino-acid sequence, 388 residues long: Beta-1,4-galactosyltransferase 5 (388 aa).

Over 1 to 14 (MRARRGLLRLPRRS) the chain is Cytoplasmic. A helical; Signal-anchor for type II membrane protein transmembrane segment spans residues 15 to 35 (LLAALFFFSLSSSLLYFVYVA). Residues 36–388 (PGIVNTYLFM…TPELAQVNEY (353 aa)) are Lumenal-facing. Asn77, Asn81, Asn90, Asn111, and Asn128 each carry an N-linked (GlcNAc...) asparagine glycan. A disulfide bridge connects residues Cys114 and Cys158. Residues 169–173 (PFRNR), 208–210 (FNR), 235–236 (VD), Tyr264, and Trp296 each bind UDP-alpha-D-galactose. Cys229 and Cys248 are disulfide-bonded. Mn(2+) is bound at residue Asp236. 298 to 301 (GEDD) contacts N-acetyl-D-glucosamine. His329 provides a ligand contact to Mn(2+). Position 329 to 330 (329 to 330 (HH)) interacts with UDP-alpha-D-galactose. Arg340 contributes to the N-acetyl-D-glucosamine binding site. Residues Asn364 and Asn373 are each glycosylated (N-linked (GlcNAc...) asparagine).

This sequence belongs to the glycosyltransferase 7 family. Requires Mn(2+) as cofactor. Ubiquitously expressed.

It localises to the golgi apparatus. The protein resides in the golgi stack membrane. The enzyme catalyses a beta-D-glucosyl-(1&lt;-&gt;1')-N-acylsphing-4-enine + UDP-alpha-D-galactose = a beta-D-Gal-(1-&gt;4)-beta-D-Glc-(1&lt;-&gt;1)-Cer(d18:1(4E)) + UDP + H(+). The protein operates within protein modification; protein glycosylation. It participates in sphingolipid metabolism. Functionally, catalyzes the synthesis of lactosylceramide (LacCer) via the transfer of galactose from UDP-galactose to glucosylceramide (GlcCer). LacCer is the starting point in the biosynthesis of all gangliosides (membrane-bound glycosphingolipids) which play pivotal roles in the CNS including neuronal maturation and axonal and myelin formation. Plays a role in the glycosylation of BMPR1A and regulation of its protein stability. Essential for extraembryonic development during early embryogenesis. This chain is Beta-1,4-galactosyltransferase 5, found in Homo sapiens (Human).